Reading from the N-terminus, the 159-residue chain is Phosphopantetheine adenylyltransferase (159 aa).

Residue T10 coordinates substrate. Residues 10–11 and H18 each bind ATP; that span reads TF. Substrate-binding residues include K42, L74, and R88. ATP-binding positions include 89 to 91, E99, and 124 to 130; these read GLR and FAYVSSS.

Belongs to the bacterial CoaD family. As to quaternary structure, homohexamer. It depends on Mg(2+) as a cofactor.

Its subcellular location is the cytoplasm. It carries out the reaction (R)-4'-phosphopantetheine + ATP + H(+) = 3'-dephospho-CoA + diphosphate. It functions in the pathway cofactor biosynthesis; coenzyme A biosynthesis; CoA from (R)-pantothenate: step 4/5. Its function is as follows. Reversibly transfers an adenylyl group from ATP to 4'-phosphopantetheine, yielding dephospho-CoA (dPCoA) and pyrophosphate. The protein is Phosphopantetheine adenylyltransferase of Thioalkalivibrio sulfidiphilus (strain HL-EbGR7).